Reading from the N-terminus, the 177-residue chain is uncharacterized protein (177 aa).

The 168-residue stretch at 10–177 (LILRQITDQD…NVYSIVKPRE (168 aa)) folds into the N-acetyltransferase domain.

It belongs to the acetyltransferase family.

This is an uncharacterized protein from Bacillus subtilis (strain 168).